Reading from the N-terminus, the 778-residue chain is Aerobic respiration control sensor protein ArcB (778 aa).

Residues 1-25 are Cytoplasmic-facing; sequence MKQIRLLAQYYVDLMMKLGLVRFSM. The helical transmembrane segment at 26–46 threads the bilayer; it reads LLALALVVLAIVVQMAVTMVL. The Periplasmic segment spans residues 47-57; it reads HGQVESIDVIR. Residues 58-78 form a helical membrane-spanning segment; the sequence is SIFFGLLITPWAVYFLSVVVE. At 79 to 778 the chain is on the cytoplasmic side; that stretch reads QLEESRQRLS…KAWVAKATKK (700 aa). The region spanning 153–223 is the PAS domain; the sequence is QSSFLRSFLD…ETDEKVFRHN (71 aa). A PAC domain is found at 226-278; that stretch reads LTYEQWLDYPDGRKACFEIRKVPYYDRVGKRHGLMGFGRDITERKRYQDALER. The Histidine kinase domain occupies 289–507; that stretch reads TISHELRTPL…TFTLTIHAPS (219 aa). H292 bears the Phosphohistidine; by autocatalysis mark. Residues 527–643 enclose the Response regulatory domain; it reads NVLLVEDIEL…ALTAMIKKFW (117 aa). At D576 the chain carries 4-aspartylphosphate. The region spanning 678–771 is the HPt domain; it reads GPKLITDGLA…RHDVEVLKAW (94 aa). Residue H717 is modified to Phosphohistidine.

Activation requires a sequential transfer of a phosphate group from a His in the primary transmitter domain, to an Asp in the receiver domain and to a His in the secondary transmitter domain.

The protein localises to the cell inner membrane. The enzyme catalyses ATP + protein L-histidine = ADP + protein N-phospho-L-histidine.. Its function is as follows. Member of the two-component regulatory system ArcB/ArcA. Sensor-regulator protein for anaerobic repression of the arc modulon. Activates ArcA via a four-step phosphorelay. ArcB can also dephosphorylate ArcA by a reverse phosphorelay involving His-717 and Asp-576. This chain is Aerobic respiration control sensor protein ArcB (arcB), found in Escherichia coli O157:H7.